The sequence spans 485 residues: Protein nucleotidyltransferase YdiU (485 aa).

ATP contacts are provided by G85, G87, R88, K108, D120, G121, R171, and R178. Catalysis depends on D249, which acts as the Proton acceptor. 2 residues coordinate Mg(2+): N250 and D259. D259 is an ATP binding site. Positions 462-485 (LPTTPNYQDPPADGDRSYQTFCGT) are disordered.

Belongs to the SELO family. Mg(2+) is required as a cofactor. The cofactor is Mn(2+).

It catalyses the reaction L-seryl-[protein] + ATP = 3-O-(5'-adenylyl)-L-seryl-[protein] + diphosphate. It carries out the reaction L-threonyl-[protein] + ATP = 3-O-(5'-adenylyl)-L-threonyl-[protein] + diphosphate. The enzyme catalyses L-tyrosyl-[protein] + ATP = O-(5'-adenylyl)-L-tyrosyl-[protein] + diphosphate. The catalysed reaction is L-histidyl-[protein] + UTP = N(tele)-(5'-uridylyl)-L-histidyl-[protein] + diphosphate. It catalyses the reaction L-seryl-[protein] + UTP = O-(5'-uridylyl)-L-seryl-[protein] + diphosphate. It carries out the reaction L-tyrosyl-[protein] + UTP = O-(5'-uridylyl)-L-tyrosyl-[protein] + diphosphate. Nucleotidyltransferase involved in the post-translational modification of proteins. It can catalyze the addition of adenosine monophosphate (AMP) or uridine monophosphate (UMP) to a protein, resulting in modifications known as AMPylation and UMPylation. This Teredinibacter turnerae (strain ATCC 39867 / T7901) protein is Protein nucleotidyltransferase YdiU.